Here is a 230-residue protein sequence, read N- to C-terminus: Geranylgeranylglyceryl phosphate synthase (230 aa).

Lysine 13 is a binding site for sn-glycerol 1-phosphate. Aspartate 15 and threonine 41 together coordinate Mg(2+). Residues 161–166, glycine 191, and 211–212 contribute to the sn-glycerol 1-phosphate site; these read YIEYSG and GN.

This sequence belongs to the GGGP/HepGP synthase family. Group I subfamily. Mg(2+) serves as cofactor.

It localises to the cytoplasm. It catalyses the reaction sn-glycerol 1-phosphate + (2E,6E,10E)-geranylgeranyl diphosphate = sn-3-O-(geranylgeranyl)glycerol 1-phosphate + diphosphate. It functions in the pathway membrane lipid metabolism; glycerophospholipid metabolism. In terms of biological role, prenyltransferase that catalyzes the transfer of the geranylgeranyl moiety of geranylgeranyl diphosphate (GGPP) to the C3 hydroxyl of sn-glycerol-1-phosphate (G1P). This reaction is the first ether-bond-formation step in the biosynthesis of archaeal membrane lipids. The sequence is that of Geranylgeranylglyceryl phosphate synthase from Methanoculleus marisnigri (strain ATCC 35101 / DSM 1498 / JR1).